A 408-amino-acid chain; its full sequence is Centromere protein U (408 aa).

Residues 1-33 (DRPRPARLSHARFSKNHSGRTHSMKDKAGRKHR) show a composition bias toward basic residues. Residues 1 to 218 (DRPRPARLSH…GKRKKPRSYT (218 aa)) form a disordered region. The residue at position 72 (Thr72) is a Phosphothreonine; by PLK1. Residue Thr92 is modified to Phosphothreonine. A compositionally biased stretch (basic and acidic residues) spans 94–103 (QEKEAKRSSD). Ser102 is modified (phosphoserine). Position 104 is a phosphothreonine (Thr104). A phosphoserine mark is found at Ser105, Ser110, and Ser114. Basic residues predominate over residues 118 to 127 (SAKKPRRKLK). Residues Ser130, Ser133, and Ser135 each carry the phosphoserine modification. Polar residues predominate over residues 176 to 186 (PQKTGPQSAES). Residue Lys178 forms a Glycyl lysine isopeptide (Lys-Gly) (interchain with G-Cter in SUMO2) linkage. Phosphoserine is present on residues Ser183 and Ser187. At Thr192 the chain carries Phosphothreonine. Ser222 is subject to Phosphoserine. Residues 273-350 (SNLKEELIKM…LRKAAYFLSN (78 aa)) are a coiled coil. Residues 293–310 (KRKNAKIISNIEKKRQRL) carry the Nuclear localization signal motif.

The protein belongs to the CENP-U/AME1 family. In terms of assembly, component of the CENPA-NAC complex, at least composed of CENPA, CENPC, CENPH, CENPM, CENPN, CENPT and CENPU. The CENPA-NAC complex interacts with the CENPA-CAD complex, composed of CENPI, CENPK, CENPL, CENPO, CENPP, CENPQ, CENPR and CENPS. Interacts with MLF1. Phosphorylated by PLK1 at Thr-72, creating a self-tethering site that specifically interacts with the polo-box domain of PLK1.

Its subcellular location is the cytoplasm. It localises to the nucleus. It is found in the chromosome. The protein resides in the centromere. The protein localises to the kinetochore. In terms of biological role, component of the CENPA-NAC (nucleosome-associated) complex, a complex that plays a central role in assembly of kinetochore proteins, mitotic progression and chromosome segregation. The CENPA-NAC complex recruits the CENPA-CAD (nucleosome distal) complex and may be involved in incorporation of newly synthesized CENPA into centromeres. Plays an important role in the correct PLK1 localization to the mitotic kinetochores. A scaffold protein responsible for the initial recruitment and maintenance of the kinetochore PLK1 population until its degradation. Involved in transcriptional repression. This chain is Centromere protein U (CENPU), found in Bos taurus (Bovine).